A 307-amino-acid polypeptide reads, in one-letter code: MANPLYRKHIISINDLSREDLELVLQTAATLKARPQPELLKPKVIASCFFEASTRTRLSFETAIHRLGASVVGFSDSSNTSLGKKGETLADTISVISQYVDAIVIRHPQEGAPRLASEFSGDTPIINAGDGANQHPTQTLLDLFTIQETQQRLDSLNIAMVGDLKYGRTVHSLSQALAKFNGNHFYFIAPEALAMPNHILHMLNEKGATYSQHANIEEVLPELDILYMTRVQKERLDPSEYANVKAQFVLRASDLIGAKENLKVLHPLPRIDEITADVDKTPYAYYFQQAENGIYARQALLSLVLNE.

Carbamoyl phosphate-binding residues include Arg55 and Thr56. L-aspartate is bound at residue Lys85. Arg106, His135, and Gln138 together coordinate carbamoyl phosphate. Residues Arg168 and Arg230 each contribute to the L-aspartate site. Leu268 and Pro269 together coordinate carbamoyl phosphate.

The protein belongs to the aspartate/ornithine carbamoyltransferase superfamily. ATCase family. Heterododecamer (2C3:3R2) of six catalytic PyrB chains organized as two trimers (C3), and six regulatory PyrI chains organized as three dimers (R2).

It catalyses the reaction carbamoyl phosphate + L-aspartate = N-carbamoyl-L-aspartate + phosphate + H(+). Its pathway is pyrimidine metabolism; UMP biosynthesis via de novo pathway; (S)-dihydroorotate from bicarbonate: step 2/3. Functionally, catalyzes the condensation of carbamoyl phosphate and aspartate to form carbamoyl aspartate and inorganic phosphate, the committed step in the de novo pyrimidine nucleotide biosynthesis pathway. The polypeptide is Aspartate carbamoyltransferase catalytic subunit (Photorhabdus laumondii subsp. laumondii (strain DSM 15139 / CIP 105565 / TT01) (Photorhabdus luminescens subsp. laumondii)).